A 319-amino-acid polypeptide reads, in one-letter code: Ribosomal RNA small subunit methyltransferase H (319 aa).

S-adenosyl-L-methionine is bound by residues 35–37 (AGH), aspartate 55, phenylalanine 84, aspartate 104, and glutamine 111.

The protein belongs to the methyltransferase superfamily. RsmH family.

The protein resides in the cytoplasm. The catalysed reaction is cytidine(1402) in 16S rRNA + S-adenosyl-L-methionine = N(4)-methylcytidine(1402) in 16S rRNA + S-adenosyl-L-homocysteine + H(+). In terms of biological role, specifically methylates the N4 position of cytidine in position 1402 (C1402) of 16S rRNA. The polypeptide is Ribosomal RNA small subunit methyltransferase H (Enterococcus hirae).